The chain runs to 250 residues: Methionine aminopeptidase (250 aa).

Position 77 (His77) interacts with substrate. A divalent metal cation-binding residues include Asp95, Asp106, and His169. His176 contributes to the substrate binding site. The a divalent metal cation site is built by Glu202 and Glu233.

The protein belongs to the peptidase M24A family. Methionine aminopeptidase type 1 subfamily. As to quaternary structure, monomer. Requires Co(2+) as cofactor. Zn(2+) is required as a cofactor. It depends on Mn(2+) as a cofactor. Fe(2+) serves as cofactor.

It carries out the reaction Release of N-terminal amino acids, preferentially methionine, from peptides and arylamides.. Its function is as follows. Removes the N-terminal methionine from nascent proteins. The N-terminal methionine is often cleaved when the second residue in the primary sequence is small and uncharged (Met-Ala-, Cys, Gly, Pro, Ser, Thr, or Val). Requires deformylation of the N(alpha)-formylated initiator methionine before it can be hydrolyzed. This is Methionine aminopeptidase from Clostridium acetobutylicum (strain ATCC 824 / DSM 792 / JCM 1419 / IAM 19013 / LMG 5710 / NBRC 13948 / NRRL B-527 / VKM B-1787 / 2291 / W).